A 74-amino-acid chain; its full sequence is ATP synthase subunit 9, mitochondrial (74 aa).

A run of 2 helical transmembrane segments spans residues 8–28 and 45–72; these read IGAG…GNVF and LFGY…LILF.

It belongs to the ATPase C chain family. As to quaternary structure, F-type ATPases have 2 components, CF(1) - the catalytic core - and CF(0) - the membrane proton channel. CF(1) has five subunits: alpha(3), beta(3), gamma(1), delta(1), epsilon(1). CF(0) has three main subunits: a, b and c.

It localises to the mitochondrion membrane. In terms of biological role, this protein is one of the chains of the nonenzymatic membrane component (F0) of mitochondrial ATPase. This Pisum sativum (Garden pea) protein is ATP synthase subunit 9, mitochondrial (ATP9).